We begin with the raw amino-acid sequence, 248 residues long: tRNA uridine(34) hydroxylase (248 aa).

The region spanning 124-218 (TKQDVIVVDT…YLEDTQNKNN (95 aa)) is the Rhodanese domain. C178 (cysteine persulfide intermediate) is an active-site residue.

It belongs to the TrhO family.

The enzyme catalyses uridine(34) in tRNA + AH2 + O2 = 5-hydroxyuridine(34) in tRNA + A + H2O. In terms of biological role, catalyzes oxygen-dependent 5-hydroxyuridine (ho5U) modification at position 34 in tRNAs. This chain is tRNA uridine(34) hydroxylase, found in Rickettsia bellii (strain OSU 85-389).